A 123-amino-acid polypeptide reads, in one-letter code: Integration host factor subunit alpha (123 aa).

Residues 97-123 (NANGTASSMSSSANAAAGDKSESASGT) form a disordered region. Over residues 102–113 (ASSMSSSANAAA) the composition is skewed to low complexity.

The protein belongs to the bacterial histone-like protein family. Heterodimer of an alpha and a beta chain.

Functionally, this protein is one of the two subunits of integration host factor, a specific DNA-binding protein that functions in genetic recombination as well as in transcriptional and translational control. The polypeptide is Integration host factor subunit alpha (Rhodopseudomonas palustris (strain HaA2)).